The primary structure comprises 207 residues: Ribosomal RNA small subunit methyltransferase G (207 aa).

S-adenosyl-L-methionine is bound by residues glycine 74, leucine 79, 125 to 126 (VE), and arginine 140.

Belongs to the methyltransferase superfamily. RNA methyltransferase RsmG family.

It localises to the cytoplasm. The enzyme catalyses guanosine(527) in 16S rRNA + S-adenosyl-L-methionine = N(7)-methylguanosine(527) in 16S rRNA + S-adenosyl-L-homocysteine. Specifically methylates the N7 position of guanine in position 527 of 16S rRNA. In Shewanella halifaxensis (strain HAW-EB4), this protein is Ribosomal RNA small subunit methyltransferase G.